The chain runs to 228 residues: PKHD-type hydroxylase Rmet_0838 (228 aa).

In terms of domain architecture, Fe2OG dioxygenase spans 78–179 (RVLPPMFNRY…RWASFFWAQS (102 aa)). Positions 96, 98, and 160 each coordinate Fe cation. Residue Arg170 participates in 2-oxoglutarate binding.

Fe(2+) serves as cofactor. Requires L-ascorbate as cofactor.

This chain is PKHD-type hydroxylase Rmet_0838, found in Cupriavidus metallidurans (strain ATCC 43123 / DSM 2839 / NBRC 102507 / CH34) (Ralstonia metallidurans).